The sequence spans 289 residues: Phycobilisome 39 kDa linker polypeptide, phycocyanin-associated, rod (289 aa).

The PBS-linker domain maps to 2–180 (PITSAASRLG…LYRGYANSDR (179 aa)). The disordered stretch occupies residues 213–233 (SYLPSKQGTAPSRTFGRSSQG). The segment covering 216 to 233 (PSKQGTAPSRTFGRSSQG) has biased composition (polar residues). The CpcD-like domain maps to 236-288 (PRLYRIEVTGISLPRYPKVRRSNKEFIVPYEQLSSTLQQINKLGGKVASITFA).

This sequence belongs to the phycobilisome linker protein family.

The protein localises to the cellular thylakoid membrane. Rod linker protein, associated with phycocyanin. Linker polypeptides determine the state of aggregation and the location of the disk-shaped phycobiliprotein units within the phycobilisome and modulate their spectroscopic properties in order to mediate a directed and optimal energy transfer. The protein is Phycobilisome 39 kDa linker polypeptide, phycocyanin-associated, rod (cpcI2) of Microchaete diplosiphon (Fremyella diplosiphon).